The primary structure comprises 346 residues: uncharacterized protein (346 aa).

Positions 10–109 (WDFIMTDPSS…SNSNGNNSPV (100 aa)) are disordered. Residues 26–44 (KGSSKNGSPKTSSPKSGSP) show a composition bias toward low complexity. Polar residues predominate over residues 56–67 (NQQLLQNDSINL). The span at 94–109 (KSSVVPSNSNGNNSPV) shows a compositional bias: low complexity.

This is an uncharacterized protein from Dictyostelium discoideum (Social amoeba).